Reading from the N-terminus, the 95-residue chain is Small ribosomal subunit protein bS6 (95 aa).

Belongs to the bacterial ribosomal protein bS6 family.

Binds together with bS18 to 16S ribosomal RNA. This is Small ribosomal subunit protein bS6 from Geobacillus sp. (strain WCH70).